Here is a 375-residue protein sequence, read N- to C-terminus: Probable protein-glutamate methylesterase BB_0415 (375 aa).

The 115-residue stretch at 6 to 120 folds into the Response regulatory domain; the sequence is SVLIIEYFAV…SHEIKKEQII (115 aa). Residues 183-375 enclose the CheB-type methylesterase domain; sequence KLRKFDIIAI…KLLKAILINS (193 aa). Catalysis depends on residues serine 195, histidine 221, and aspartate 317.

The catalysed reaction is [protein]-L-glutamate 5-O-methyl ester + H2O = L-glutamyl-[protein] + methanol + H(+). The polypeptide is Probable protein-glutamate methylesterase BB_0415 (Borreliella burgdorferi (strain ATCC 35210 / DSM 4680 / CIP 102532 / B31) (Borrelia burgdorferi)).